The following is a 502-amino-acid chain: MAISLLCLFLITFVSLTIVGCKIKRSIWNLPPSPPKLPVIGNLHQVGELPHRSFRRLAERTGHVMLLHLGFVPVTVISSREAAEEVLRTHDLDCCSRPNLVGSRLISRGFKDLNFTPYGEEWKERRRFLVGELFCSKKLQSFIYIKEVECNFLVKKLSESAVDQSPVDLSKTLFWLAASILFRVAFGQSFHESEFTDTDKIDELVFETETAQGSFTCSDFFPIAGLGWLVDWISGQHKRLNDVFLKLDALLQHVIDDHSNPGRSKDHKDIVDVMLDVMHKQGKDDSLRLTIDHIKGLLTNIIIAGIDTGALTMIWTMTELARNPEIMKKVQGEIRDRLGNNRERITKEDLDKVPFLNLVIKETFRLHPVAPLLLPRETMAHVKVQGYDIPPKRRILVNAWAIGRDPKLWTDPEEFKPERFIDSPVDYRGQHFELLPFGSGRRICPGMAMGMATLELGLLNLLYFFDWKLPDGMSHKDIDTEEAGTLTVVKKVHLKLVPVRVP.

Residues M1–C21 form a helical membrane-spanning segment. C444 serves as a coordination point for heme.

Belongs to the cytochrome P450 family. The cofactor is heme.

The protein resides in the membrane. This is Cytochrome P450 71B17 (CYP71B17) from Arabidopsis thaliana (Mouse-ear cress).